The following is a 403-amino-acid chain: Putative transport protein TP_0553 (403 aa).

Transmembrane regions (helical) follow at residues 10–30 (ISLF…FVPY), 31–51 (LTVL…YRAL), 92–112 (AAVF…FIAI), 202–222 (LYFF…ALPL), 243–263 (KGLF…YGIF), 271–291 (LAML…CVWL), 293–313 (VGIS…LFVA), and 350–370 (TFGF…FTVI).

This sequence belongs to the autoinducer-2 exporter (AI-2E) (TC 2.A.86) family.

The protein resides in the cell membrane. This Treponema pallidum (strain Nichols) protein is Putative transport protein TP_0553.